Reading from the N-terminus, the 107-residue chain is Iron-binding protein IscA (107 aa).

Cys-35, Cys-99, and Cys-101 together coordinate Fe cation.

It belongs to the HesB/IscA family. In terms of assembly, homodimer; may form tetramers and higher multimers. The cofactor is Fe cation.

Is able to transfer iron-sulfur clusters to apo-ferredoxin. Multiple cycles of [2Fe2S] cluster formation and transfer are observed, suggesting that IscA acts catalytically. Recruits intracellular free iron so as to provide iron for the assembly of transient iron-sulfur cluster in IscU in the presence of IscS, L-cysteine and the thioredoxin reductase system TrxA/TrxB. This Yersinia enterocolitica serotype O:8 / biotype 1B (strain NCTC 13174 / 8081) protein is Iron-binding protein IscA.